A 249-amino-acid chain; its full sequence is DNA repair protein RecO (249 aa).

This sequence belongs to the RecO family.

Its function is as follows. Involved in DNA repair and RecF pathway recombination. In Polaromonas naphthalenivorans (strain CJ2), this protein is DNA repair protein RecO.